A 464-amino-acid polypeptide reads, in one-letter code: MKFIDFSAYKVEAKKLLLIALPILLAQIAQNSMGLVDTIMSGRVSSADMAAISVGASIWFPLVLFGHGLLLALPPTISYLNGSGKRDQIAHQVRQGIWIILFSCLPLGILIYYSNLVFDYMQVEDHLKEITIGYLHAMIWGLPAYLLMINFRCLNDGIAKTKPAMVITFLGLGLNIPLNYIFIYGKLGIPAFGAVGCGIATAIVNWFMCILMIAYCKNARNQRDLKVFAKILEKPNFTTLKKLLNLGFPIAVALFCEVALFALTALLLSPLGTDIVASHQIALNTSSFLFMLPMSLGMAATILVGQRLGEGAADKAKQVSYSALIVGLLIAVITATLTVIFRVEIAEIFVKDRDVIAMAGTLLLIAALYQFSDTVQVVAGGALRGYKDTKAILYITLFCYWVVGMPMGYTLARTDLLMPALGAEGFWIGFVVSLTIAATLLMIRMRKIQAQPDAILFAKLEKLK.

A run of 12 helical transmembrane segments spans residues 16–36 (LLLI…MGLV), 51–71 (AISV…GLLL), 97–117 (IWII…SNLV), 129–149 (EITI…LLMI), 164–184 (AMVI…IFIY), 194–214 (AVGC…LMIA), 248–268 (FPIA…ALLL), 285–305 (TSSF…ILVG), 321–341 (YSAL…TVIF), 355–375 (VIAM…SDTV), 391–411 (AILY…GYTL), and 423–443 (AEGF…LLMI).

This sequence belongs to the multi antimicrobial extrusion (MATE) (TC 2.A.66.1) family.

Its subcellular location is the cell inner membrane. In terms of biological role, multidrug efflux pump. This chain is Probable multidrug resistance protein NorM (norM), found in Pasteurella multocida (strain Pm70).